The chain runs to 394 residues: NAD(P)H-quinone oxidoreductase subunit H (394 aa).

The protein belongs to the complex I 49 kDa subunit family. NDH-1 can be composed of about 15 different subunits; different subcomplexes with different compositions have been identified which probably have different functions.

Its subcellular location is the cellular thylakoid membrane. The catalysed reaction is a plastoquinone + NADH + (n+1) H(+)(in) = a plastoquinol + NAD(+) + n H(+)(out). It catalyses the reaction a plastoquinone + NADPH + (n+1) H(+)(in) = a plastoquinol + NADP(+) + n H(+)(out). Functionally, NDH-1 shuttles electrons from an unknown electron donor, via FMN and iron-sulfur (Fe-S) centers, to quinones in the respiratory and/or the photosynthetic chain. The immediate electron acceptor for the enzyme in this species is believed to be plastoquinone. Couples the redox reaction to proton translocation, and thus conserves the redox energy in a proton gradient. Cyanobacterial NDH-1 also plays a role in inorganic carbon-concentration. The protein is NAD(P)H-quinone oxidoreductase subunit H of Microcystis aeruginosa (strain NIES-843 / IAM M-2473).